We begin with the raw amino-acid sequence, 283 residues long: Elongation factor Ts (283 aa).

The involved in Mg(2+) ion dislocation from EF-Tu stretch occupies residues 79–82 (TDFV).

It belongs to the EF-Ts family.

Its subcellular location is the cytoplasm. Functionally, associates with the EF-Tu.GDP complex and induces the exchange of GDP to GTP. It remains bound to the aminoacyl-tRNA.EF-Tu.GTP complex up to the GTP hydrolysis stage on the ribosome. The sequence is that of Elongation factor Ts from Pseudoalteromonas translucida (strain TAC 125).